We begin with the raw amino-acid sequence, 379 residues long: Cobalt-precorrin-5B C(1)-methyltransferase (379 aa).

The protein belongs to the CbiD family.

The catalysed reaction is Co-precorrin-5B + S-adenosyl-L-methionine = Co-precorrin-6A + S-adenosyl-L-homocysteine. The protein operates within cofactor biosynthesis; adenosylcobalamin biosynthesis; cob(II)yrinate a,c-diamide from sirohydrochlorin (anaerobic route): step 6/10. Functionally, catalyzes the methylation of C-1 in cobalt-precorrin-5B to form cobalt-precorrin-6A. The protein is Cobalt-precorrin-5B C(1)-methyltransferase of Salmonella paratyphi B (strain ATCC BAA-1250 / SPB7).